Here is a 263-residue protein sequence, read N- to C-terminus: Putative TATA-binding protein pB263R (263 aa).

This sequence belongs to the asfivirus B263R family.

In terms of biological role, putative TATA-binding protein. This chain is Putative TATA-binding protein pB263R, found in Ornithodoros (relapsing fever ticks).